The primary structure comprises 276 residues: Bis(5'-nucleosyl)-tetraphosphatase, symmetrical (276 aa).

The protein belongs to the Ap4A hydrolase family.

The catalysed reaction is P(1),P(4)-bis(5'-adenosyl) tetraphosphate + H2O = 2 ADP + 2 H(+). Functionally, hydrolyzes diadenosine 5',5'''-P1,P4-tetraphosphate to yield ADP. The polypeptide is Bis(5'-nucleosyl)-tetraphosphatase, symmetrical (Dechloromonas aromatica (strain RCB)).